Reading from the N-terminus, the 372-residue chain is Glutamate 5-kinase (372 aa).

Lys14 is a binding site for ATP. Residues Ser54, Asp141, and Asn153 each coordinate substrate. 173–174 (TD) is a binding site for ATP. The region spanning 280–358 (RGTLVLDDGA…DAIVGLLGYM (79 aa)) is the PUA domain.

It belongs to the glutamate 5-kinase family.

The protein resides in the cytoplasm. It carries out the reaction L-glutamate + ATP = L-glutamyl 5-phosphate + ADP. It functions in the pathway amino-acid biosynthesis; L-proline biosynthesis; L-glutamate 5-semialdehyde from L-glutamate: step 1/2. Catalyzes the transfer of a phosphate group to glutamate to form L-glutamate 5-phosphate. This chain is Glutamate 5-kinase, found in Pseudomonas fluorescens (strain Pf0-1).